The primary structure comprises 217 residues: Salivary glue protein Sgs-3 (217 aa).

A signal peptide spans 1–23 (MKLTIATVLASILLIGFANVANC). The segment covering 45-130 (KSTSTTTTTT…KPTTHSTPKT (86 aa)) has biased composition (low complexity). The interval 45 to 163 (KSTSTTTTTT…KHTTPTTTTT (119 aa)) is disordered. The segment covering 131-154 (KPTKHTTPKTKPTKHTTPKTKPTK) has biased composition (basic residues).

The chain is Salivary glue protein Sgs-3 (Sgs3) from Drosophila simulans (Fruit fly).